Here is a 173-residue protein sequence, read N- to C-terminus: NADH-ubiquinone oxidoreductase chain 6 (173 aa).

5 helical membrane passes run 1-21 (MTYF…AVAS), 27-47 (YGVV…LSLG), 48-68 (ISFV…VVFV), 87-107 (VIGY…IGGF), and 139-159 (CGVG…FVVL).

It belongs to the complex I subunit 6 family.

It localises to the mitochondrion membrane. The catalysed reaction is a ubiquinone + NADH + 5 H(+)(in) = a ubiquinol + NAD(+) + 4 H(+)(out). Functionally, core subunit of the mitochondrial membrane respiratory chain NADH dehydrogenase (Complex I) that is believed to belong to the minimal assembly required for catalysis. Complex I functions in the transfer of electrons from NADH to the respiratory chain. The immediate electron acceptor for the enzyme is believed to be ubiquinone. In Alca torda (Razorbill), this protein is NADH-ubiquinone oxidoreductase chain 6 (MT-ND6).